The sequence spans 248 residues: Probable transcriptional regulatory protein ECH_0704 (248 aa).

Residues Met1 to Arg21 form a disordered region.

The protein belongs to the TACO1 family.

Its subcellular location is the cytoplasm. This Ehrlichia chaffeensis (strain ATCC CRL-10679 / Arkansas) protein is Probable transcriptional regulatory protein ECH_0704.